A 591-amino-acid chain; its full sequence is L-fucose isomerase (591 aa).

Catalysis depends on proton acceptor residues glutamate 337 and aspartate 361. The Mn(2+) site is built by glutamate 337, aspartate 361, and histidine 528.

It belongs to the L-fucose isomerase family. As to quaternary structure, homohexamer. Requires Mn(2+) as cofactor.

The protein localises to the cytoplasm. It carries out the reaction L-fucose = L-fuculose. It participates in carbohydrate degradation; L-fucose degradation; L-lactaldehyde and glycerone phosphate from L-fucose: step 1/3. Converts the aldose L-fucose into the corresponding ketose L-fuculose. This chain is L-fucose isomerase, found in Escherichia coli (strain SMS-3-5 / SECEC).